A 346-amino-acid polypeptide reads, in one-letter code: Mitogen-activated protein kinase kinase 1c (346 aa).

In terms of domain architecture, Protein kinase spans 70-332 (LELVRFLGKG…TTDLLKHPFL (263 aa)). ATP-binding positions include 76 to 84 (LGKGAGGTV) and lysine 99. The active-site Proton acceptor is the aspartate 194.

Belongs to the protein kinase superfamily. STE Ser/Thr protein kinase family. MAP kinase kinase subfamily.

The catalysed reaction is L-seryl-[protein] + ATP = O-phospho-L-seryl-[protein] + ADP + H(+). It carries out the reaction L-threonyl-[protein] + ATP = O-phospho-L-threonyl-[protein] + ADP + H(+). It catalyses the reaction L-tyrosyl-[protein] + ATP = O-phospho-L-tyrosyl-[protein] + ADP + H(+). In terms of biological role, the CERK1, MEKK1a/b, MKK1a/b/c and MPK4a/b proteins are involved in pathogen defense. The pathway induces rapid growth inhibition, cell wall depositions and accumulation of defense-related transcripts. This protein is required for full defense response to fungal pathogen chitin. In Physcomitrium patens (Spreading-leaved earth moss), this protein is Mitogen-activated protein kinase kinase 1c.